The primary structure comprises 331 residues: Pantothenate kinase (331 aa).

109–116 (GSVAVGKS) is an ATP binding site.

Belongs to the prokaryotic pantothenate kinase family.

Its subcellular location is the cytoplasm. It catalyses the reaction (R)-pantothenate + ATP = (R)-4'-phosphopantothenate + ADP + H(+). It functions in the pathway cofactor biosynthesis; coenzyme A biosynthesis; CoA from (R)-pantothenate: step 1/5. This Rhizobium meliloti (strain 1021) (Ensifer meliloti) protein is Pantothenate kinase.